We begin with the raw amino-acid sequence, 129 residues long: Protein Turandot A (129 aa).

An N-terminal signal peptide occupies residues Met1–Gly21. An N-linked (GlcNAc...) asparagine glycan is attached at Asn49.

Belongs to the Turandot family.

It localises to the secreted. Its function is as follows. A humoral factor that plays a role in stress tolerance; gives increased resistance to the lethal effects of bacterial challenge and stress. Regulated by the JAK/STAT pathway and NF-KB-like Relish pathway in the fat body, upd3 in the hemocytes and Mekk1 in response to septic injury and consequent immune response. This Drosophila yakuba (Fruit fly) protein is Protein Turandot A (TotA).